A 422-amino-acid polypeptide reads, in one-letter code: Beta-1,3-galactosyltransferase 2 (422 aa).

The Cytoplasmic segment spans residues 1 to 20; the sequence is MLQWRRRHCCFAKMTWSPKR. A helical; Signal-anchor for type II membrane protein membrane pass occupies residues 21-43; that stretch reads SLLRTPLTGVLSLVFLFAMFLFF. Residues 44–422 lie on the Lumenal side of the membrane; the sequence is NHHDWLPGRP…AGRYRHRKLH (379 aa). Asparagine 75, asparagine 98, asparagine 119, asparagine 176, and asparagine 226 each carry an N-linked (GlcNAc...) asparagine glycan. Residues 91–110 are disordered; it reads LRPHTASNSSNTELSPQGVT. Polar residues predominate over residues 95–110; the sequence is TASNSSNTELSPQGVT.

The protein belongs to the glycosyltransferase 31 family. Requires Mn(2+) as cofactor. As to expression, detected in brain and heart.

Its subcellular location is the golgi apparatus membrane. It carries out the reaction an N-acetyl-beta-D-glucosaminyl derivative + UDP-alpha-D-galactose = a beta-D-galactosyl-(1-&gt;3)-N-acetyl-beta-D-glucosaminyl derivative + UDP + H(+). The catalysed reaction is a beta-D-GlcNAc-(1-&gt;3)-beta-D-Gal-(1-&gt;4)-beta-D-Glc-(1&lt;-&gt;1)-Cer(d18:1(4E)) + UDP-alpha-D-galactose = a beta-D-Gal-(1-&gt;3)-beta-D-GlcNAc-(1-&gt;3)-beta-D-Gal-(1-&gt;4)-beta-D-Glc-(1&lt;-&gt;1')-Cer(d18:1(4E)) + UDP + H(+). It catalyses the reaction a neolactoside IV(3)-beta-GlcNAc-nLc4Cer(d18:1(4E)) + UDP-alpha-D-galactose = a neolactoside IV(3)-beta-[Gal-beta-(1-&gt;3)-GlcNAc]-nLc4Cer(d18:1(4E)) + UDP + H(+). Its pathway is protein modification; protein glycosylation. Its function is as follows. Beta-1,3-galactosyltransferase that transfers galactose from UDP-galactose to substrates with a terminal beta-N-acetylglucosamine (beta-GlcNAc) residue. Can also utilize substrates with a terminal galactose residue, albeit with lower efficiency. Involved in the biosynthesis of the carbohydrate moieties of glycolipids and glycoproteins. This is Beta-1,3-galactosyltransferase 2 from Mus musculus (Mouse).